A 599-amino-acid polypeptide reads, in one-letter code: Elongation factor 4 (599 aa).

Positions 5–187 (SHIRNFSIIA…RLVAVIPPPT (183 aa)) constitute a tr-type G domain. GTP is bound by residues 17–22 (DHGKST) and 134–137 (NKMD).

Belongs to the TRAFAC class translation factor GTPase superfamily. Classic translation factor GTPase family. LepA subfamily.

The protein resides in the cell inner membrane. It carries out the reaction GTP + H2O = GDP + phosphate + H(+). Its function is as follows. Required for accurate and efficient protein synthesis under certain stress conditions. May act as a fidelity factor of the translation reaction, by catalyzing a one-codon backward translocation of tRNAs on improperly translocated ribosomes. Back-translocation proceeds from a post-translocation (POST) complex to a pre-translocation (PRE) complex, thus giving elongation factor G a second chance to translocate the tRNAs correctly. Binds to ribosomes in a GTP-dependent manner. The protein is Elongation factor 4 of Stutzerimonas stutzeri (strain A1501) (Pseudomonas stutzeri).